We begin with the raw amino-acid sequence, 259 residues long: Complement factor D (259 aa).

The first 21 residues, 1-21 (MADRSGHLAALILLGAAVCVA), serve as a signal peptide directing secretion. Positions 22–26 (QPRGR) are cleaved as a propeptide — activation peptide. In terms of domain architecture, Peptidase S1 spans 27–254 (ILGGQEAKSH…YVAWIDGVMA (228 aa)). Cys-52 and Cys-68 are oxidised to a cystine. Active-site charge relay system residues include His-67 and Asp-115. 3 cysteine pairs are disulfide-bonded: Cys-149–Cys-215, Cys-180–Cys-196, and Cys-205–Cys-230. Residue Ser-209 is the Charge relay system of the active site. The self-inhibitor loop stretch occupies residues 224-228 (TSGSR).

This sequence belongs to the peptidase S1 family. In terms of processing, CFD is activated by the removal of 5 residues at the N-terminus, named activation peptide, by the MASP-3 isoform of MASP1.

The protein resides in the secreted. The enzyme catalyses Selective cleavage of Arg-|-Lys bond in complement factor B when in complex with complement subcomponent C3b or with cobra venom factor.. With respect to regulation, circulates in plasma in a mature but self-inhibited form. Activated by factor B (CFB), which displaces the self-inhibition loop. Associates with CFB complexed with complement C3b. Functionally, serine protease that initiates the alternative pathway of the complement system, a cascade of proteins that leads to phagocytosis and breakdown of pathogens and signaling that strengthens the adaptive immune system. In contrast to other complement pathways (classical, lectin and GZMK) that are directly activated by pathogens or antigen-antibody complexes, the alternative complement pathway is initiated by the spontaneous hydrolysis of complement C3. The alternative complement pathway acts as an amplification loop that enhances complement activation by mediating the formation of C3 and C5 convertases. Activated CFD cleaves factor B (CFB) when the latter is complexed with complement C3b, activating the C3 convertase of the alternative pathway. The polypeptide is Complement factor D (CFD) (Sus scrofa (Pig)).